Consider the following 143-residue polypeptide: Large ribosomal subunit protein uL11 (143 aa).

It belongs to the universal ribosomal protein uL11 family. In terms of assembly, part of the ribosomal stalk of the 50S ribosomal subunit. Interacts with L10 and the large rRNA to form the base of the stalk. L10 forms an elongated spine to which L12 dimers bind in a sequential fashion forming a multimeric L10(L12)X complex. In terms of processing, one or more lysine residues are methylated.

In terms of biological role, forms part of the ribosomal stalk which helps the ribosome interact with GTP-bound translation factors. The protein is Large ribosomal subunit protein uL11 of Bifidobacterium longum (strain DJO10A).